We begin with the raw amino-acid sequence, 1045 residues long: Isoleucine--tRNA ligase (1045 aa).

Positions Pro-49–Thr-59 match the 'HIGH' region motif. The 'KMSKS' region motif lies at Lys-591 to Ser-595. ATP is bound at residue Lys-594.

It belongs to the class-I aminoacyl-tRNA synthetase family. IleS type 2 subfamily. Monomer. Zn(2+) serves as cofactor.

The protein localises to the cytoplasm. The catalysed reaction is tRNA(Ile) + L-isoleucine + ATP = L-isoleucyl-tRNA(Ile) + AMP + diphosphate. Catalyzes the attachment of isoleucine to tRNA(Ile). As IleRS can inadvertently accommodate and process structurally similar amino acids such as valine, to avoid such errors it has two additional distinct tRNA(Ile)-dependent editing activities. One activity is designated as 'pretransfer' editing and involves the hydrolysis of activated Val-AMP. The other activity is designated 'posttransfer' editing and involves deacylation of mischarged Val-tRNA(Ile). This is Isoleucine--tRNA ligase from Methanothermobacter marburgensis (strain ATCC BAA-927 / DSM 2133 / JCM 14651 / NBRC 100331 / OCM 82 / Marburg) (Methanobacterium thermoautotrophicum).